We begin with the raw amino-acid sequence, 132 residues long: MRHRLSGRQLGRNSSHRKAMFRNMSASLVEHELIKTTLPKAKELRRVIEPLITLAKVDSVANRRLANARLQSKSAVGKLFSELGKRYATRPGGYVRILKCGFRAGDKAPMAYVELVDRPARAVETAVEVDAE.

It belongs to the bacterial ribosomal protein bL17 family. As to quaternary structure, part of the 50S ribosomal subunit. Contacts protein L32.

In Cellvibrio japonicus (strain Ueda107) (Pseudomonas fluorescens subsp. cellulosa), this protein is Large ribosomal subunit protein bL17.